The chain runs to 224 residues: PHD finger-containing protein 5 (224 aa).

The PHD-type zinc-finger motif lies at 31–81 (KKPCEVCGSDANELLMMTCFMCRDTREHTYCARVMFQRVPRLWICEECRDF). Zn(2+) contacts are provided by Cys34, Cys37, Cys49, Cys52, His58, Cys61, Cys75, and Cys78. The interval 116 to 137 (PRTNQVVDNHQDPPIDQTDPSS) is disordered.

In terms of assembly, interacts directly with AIPP3/BDT1.

Together with AIPP3/BDT1, cooperates to form a BAH-PHD bivalent histone reader complex able to read histone H3 lysine 27 trimethylation (H3K27me3) histone marks in order to regulate transcription, especially to prevent early flowering; promotes AIPP3/BDT1 binding to H3K27me3. This is PHD finger-containing protein 5 from Arabidopsis thaliana (Mouse-ear cress).